The sequence spans 448 residues: MSRFHLPLAAAVVLVSCLWSANALVRPDGVGKLPALGWNSWNAFGCDIDDAKIMTAAKEIVNLGLKDLGYEYINIDDCWSVKSGRDKTTKRIVPDPAKFPDGIAGVADRIHDLGLKVGIYSSAGLTTCAGYPASLGYEEIDAQTFAEWGIDYLKYDNCGVPSNWTDAYTFCVPDPGSASTNGTCPDNENPAPQGYDWSTSLTAQRHQRMRDALLGVEHTIFYSLCEWGQADVSAWGNATGNSWRMSGDITPSWDRIAAIANENSFLLNHVDFWGHSDPDMLEVGNGDLTLAENRAHFALWAAMKSPLIIGTALDGIDPAHLEILLNKYLIAFHQDPVIGRPAYPYKWGYSPDWTFDPAHPAEYWSGPSSTLDGTLVLMLNSEGSRQTRTAVWKEIPELKDALGRKGRRQTGFRVTDVWTGKDLGCVRDHYTVTLESHDVAALLVGKGC.

The signal sequence occupies residues 1 to 23; the sequence is MSRFHLPLAAAVVLVSCLWSANA. Cystine bridges form between cysteine 46/cysteine 78 and cysteine 128/cysteine 158. Catalysis depends on aspartate 156, which acts as the Nucleophile. Asparagine 163 and asparagine 181 each carry an N-linked (GlcNAc...) asparagine glycan. Position 226–230 (226–230) interacts with substrate; it reads EWGQA. Asparagine 237 carries N-linked (GlcNAc...) asparagine glycosylation. Aspartate 248 serves as the catalytic Proton donor.

This sequence belongs to the glycosyl hydrolase 27 family.

The protein localises to the secreted. The enzyme catalyses Hydrolysis of terminal, non-reducing alpha-D-galactose residues in alpha-D-galactosides, including galactose oligosaccharides, galactomannans and galactolipids.. In terms of biological role, hydrolyzes a variety of simple alpha-D-galactoside as well as more complex molecules such as oligosaccharides and polysaccharides. This Aspergillus clavatus (strain ATCC 1007 / CBS 513.65 / DSM 816 / NCTC 3887 / NRRL 1 / QM 1276 / 107) protein is Probable alpha-galactosidase B (aglB).